The primary structure comprises 437 residues: O-antigen export system ATP-binding protein RfbB (437 aa).

In terms of domain architecture, ABC transporter spans 37–256 (LRGKRQSRDA…YREAISLAEA (220 aa)). 69–76 (GRNGSGKS) is a binding site for ATP.

It belongs to the ABC transporter superfamily.

It localises to the cell inner membrane. In terms of biological role, may form an ATP-driven O-antigen export apparatus, in association with RfbA. The sequence is that of O-antigen export system ATP-binding protein RfbB (rfbB) from Myxococcus xanthus.